A 200-amino-acid chain; its full sequence is 3-isopropylmalate dehydratase small subunit (200 aa).

Belongs to the LeuD family. LeuD type 1 subfamily. As to quaternary structure, heterodimer of LeuC and LeuD.

The enzyme catalyses (2R,3S)-3-isopropylmalate = (2S)-2-isopropylmalate. Its pathway is amino-acid biosynthesis; L-leucine biosynthesis; L-leucine from 3-methyl-2-oxobutanoate: step 2/4. Functionally, catalyzes the isomerization between 2-isopropylmalate and 3-isopropylmalate, via the formation of 2-isopropylmaleate. The protein is 3-isopropylmalate dehydratase small subunit of Vibrio cholerae serotype O1 (strain ATCC 39541 / Classical Ogawa 395 / O395).